The chain runs to 98 residues: Bombyxin A-3 homolog (98 aa).

The first 18 residues, 1–18 (MRTQVLFLVLEVAAMASG), serve as a signal peptide directing secretion. Cystine bridges form between Cys26-Cys85, Cys38-Cys98, and Cys84-Cys89. The propeptide at 47-75 (TPYTSSESEGYGWRWLAPQRARQLAGARG) is c peptide like.

The protein belongs to the insulin family. Heterodimer of a B chain and an A chain linked by two disulfide bonds.

The protein localises to the secreted. Its function is as follows. Brain peptide responsible for activation of prothoracic glands to produce ecdysone in insects. The chain is Bombyxin A-3 homolog (SBXA3) from Samia cynthia (Ailanthus silkmoth).